A 249-amino-acid chain; its full sequence is U2 small nuclear ribonucleoprotein A' (249 aa).

LRR repeat units follow at residues 20–41, 43–64, 65–87, and 89–110; these read KERELDLRGNKIPVIENLGATE, QFDTIDLSDNEIVKLENFPYLN, RLGTLLINNNRITRINPNLGEFL, and KLHSLVLTNNRLVNLVEIDPLA. Positions 123 to 161 constitute an LRRCT domain; it reads NNITKKANYRLYVIHKLKSLRVLDFIKIKAKERAEAASL.

The protein belongs to the U2 small nuclear ribonucleoprotein A family.

It localises to the nucleus. It is found in the nucleus speckle. In terms of biological role, this protein is associated with sn-RNP U2. It helps the A' protein to bind stem loop IV of U2 snRNA. In Arabidopsis thaliana (Mouse-ear cress), this protein is U2 small nuclear ribonucleoprotein A'.